We begin with the raw amino-acid sequence, 526 residues long: Phosphoenolpyruvate carboxykinase (ATP) 2 (526 aa).

Residues R55, Y190, and K196 each contribute to the substrate site. Residues K196, H215, and 231-239 (GLSGTGKTT) contribute to the ATP site. The Mn(2+) site is built by K196 and H215. Residue D252 participates in Mn(2+) binding. E280, R317, and T442 together coordinate ATP. Substrate is bound at residue R317.

Belongs to the phosphoenolpyruvate carboxykinase (ATP) family. Requires Mn(2+) as cofactor.

Its subcellular location is the cytoplasm. The enzyme catalyses oxaloacetate + ATP = phosphoenolpyruvate + ADP + CO2. It participates in carbohydrate biosynthesis; gluconeogenesis. Involved in the gluconeogenesis. Catalyzes the conversion of oxaloacetate (OAA) to phosphoenolpyruvate (PEP) through direct phosphoryl transfer between the nucleoside triphosphate and OAA. This is Phosphoenolpyruvate carboxykinase (ATP) 2 from Moorella thermoacetica (strain ATCC 39073 / JCM 9320).